A 908-amino-acid polypeptide reads, in one-letter code: 26S proteasome non-ATPase regulatory subunit 2 (908 aa).

N-acetylmethionine is present on Met1. A disordered region spans residues 1 to 52; it reads MEEGGRDKAPLQPQQPPATSPGSGDEKPSGKERRDAGDKDKEQELSEEDKQL. Basic and acidic residues predominate over residues 24–52; the sequence is GDEKPSGKERRDAGDKDKEQELSEEDKQL. Phosphoserine occurs at positions 29 and 147. Tyr194 is subject to Phosphotyrosine. Phosphoserine is present on residues Ser361 and Ser363. 5 PC repeats span residues 409–442, 443–479, 480–514, 517–551, and 560–589; these read SAAASLGMILLWDVDGGLTQIDKYLYSSEDYIKS, GALLACGIVNSGVRNECDPALALLSDYVLHNSNTMRL, GSIFGLGLAYAGSNREDVLTLLLPVMGDSKSSMEV, VTALACGMIAVGSCNGDVTSTILQTIMEKSETELK, and LGLGLNHLGKGEAIEAILAALEVVSEPFRS. Lys551 carries the post-translational modification N6-acetyllysine. Basic and acidic residues predominate over residues 623–643; the sequence is KEKEEDKDKKEKKDKDKKEAP. Positions 623–645 are disordered; it reads KEKEEDKDKKEKKDKDKKEAPAD. PC repeat units follow at residues 692 to 723 and 742 to 757; these read LALALISVSNPRLNILDTLSKFSHDADPEVSY and AAMLRQLAQYHAKDPN. The segment at 708–903 is required for interaction with UBLCP1; that stretch reads DTLSKFSHDA…LEGFVILRKN (196 aa).

The protein belongs to the proteasome subunit S2 family. In terms of assembly, component of the 19S proteasome regulatory particle complex. The 26S proteasome consists of a 20S core particle (CP) and two 19S regulatory subunits (RP). The regulatory particle is made of a lid composed of 9 subunits, a base containing 6 ATPases and few additional components including PSMD2. Interacts with RPGRIP1L. Interacts with CRY1 in a KDM8-dependent manner. Interacts (via C-terminus) with phosphatase UBLCP1 (via ubiquitin-like domain); the interaction recruits UBLCP1 to the 19S regulatory particle where it dephosphorylates 19S subunit PSMC2/RPT1 which impairs PSMC2 ATPase activity and disrupts 26S proteasome assembly.

Its function is as follows. Component of the 26S proteasome, a multiprotein complex involved in the ATP-dependent degradation of ubiquitinated proteins. This complex plays a key role in the maintenance of protein homeostasis by removing misfolded or damaged proteins, which could impair cellular functions, and by removing proteins whose functions are no longer required. Therefore, the proteasome participates in numerous cellular processes, including cell cycle progression, apoptosis, or DNA damage repair. In terms of biological role, binds to the intracellular domain of tumor necrosis factor type 1 receptor. The binding domain of TRAP1 and TRAP2 resides outside the death domain of TNFR1. The polypeptide is 26S proteasome non-ATPase regulatory subunit 2 (PSMD2) (Bos taurus (Bovine)).